Here is a 159-residue protein sequence, read N- to C-terminus: Ribosomal RNA large subunit methyltransferase H (159 aa).

L76 and G108 together coordinate S-adenosyl-L-methionine.

This sequence belongs to the RNA methyltransferase RlmH family. In terms of assembly, homodimer.

The protein resides in the cytoplasm. The catalysed reaction is pseudouridine(1915) in 23S rRNA + S-adenosyl-L-methionine = N(3)-methylpseudouridine(1915) in 23S rRNA + S-adenosyl-L-homocysteine + H(+). Specifically methylates the pseudouridine at position 1915 (m3Psi1915) in 23S rRNA. In Limosilactobacillus reuteri (strain DSM 20016) (Lactobacillus reuteri), this protein is Ribosomal RNA large subunit methyltransferase H.